The primary structure comprises 395 residues: Protein RIF2 (395 aa).

Interacts with RIF1 and RAP1 C-terminus.

The protein resides in the nucleus. It is found in the chromosome. The protein localises to the telomere. Involved in transcriptional silencing and telomere length regulation. Its role in telomere length regulation results from either a block in elongation or promoting degradation of the telomere ends. Loss of RIF1 function results in derepression of an HMR silencer, whose ARS consensus element has been deleted, and in the elongation of telomeres. RAP1 may target the binding of RIF1 to silencers and telomeres. In Saccharomyces cerevisiae (strain ATCC 204508 / S288c) (Baker's yeast), this protein is Protein RIF2 (RIF2).